The following is a 450-amino-acid chain: Putative zinc metalloprotease TP_0600 (450 aa).

His-18 is a Zn(2+) binding site. The active site involves Glu-19. His-22 is a Zn(2+) binding site. The chain crosses the membrane as a helical span at residues 102–124 (IAFAGPLANVLMAVMVLALVSAL). Residues 200–278 (TITPDRDAHT…SVVLTVLRSG (79 aa)) enclose the PDZ domain. The next 2 helical transmembrane spans lie at 384 to 406 (VCVS…LILF) and 421 to 443 (VLYY…AFWN).

The protein belongs to the peptidase M50B family. The cofactor is Zn(2+).

It localises to the cell inner membrane. In Treponema pallidum (strain Nichols), this protein is Putative zinc metalloprotease TP_0600.